The sequence spans 508 residues: Photosystem II CP47 reaction center protein (508 aa).

Helical transmembrane passes span 21-36 (AVHL…WAGS), 101-115 (IVLS…VWHW), 140-156 (GIHL…FGAF), 203-218 (IAAG…FHLT), 237-252 (VLSS…AFVV), and 457-472 (SFAL…HGSR).

It belongs to the PsbB/PsbC family. PsbB subfamily. As to quaternary structure, PSII is composed of 1 copy each of membrane proteins PsbA, PsbB, PsbC, PsbD, PsbE, PsbF, PsbH, PsbI, PsbJ, PsbK, PsbL, PsbM, PsbT, PsbX, PsbY, PsbZ, Psb30/Ycf12, peripheral proteins PsbO, CyanoQ (PsbQ), PsbU, PsbV and a large number of cofactors. It forms dimeric complexes. Binds multiple chlorophylls. PSII binds additional chlorophylls, carotenoids and specific lipids. serves as cofactor.

It localises to the cellular thylakoid membrane. In terms of biological role, one of the components of the core complex of photosystem II (PSII). It binds chlorophyll and helps catalyze the primary light-induced photochemical processes of PSII. PSII is a light-driven water:plastoquinone oxidoreductase, using light energy to abstract electrons from H(2)O, generating O(2) and a proton gradient subsequently used for ATP formation. This Synechococcus elongatus (strain ATCC 33912 / PCC 7942 / FACHB-805) (Anacystis nidulans R2) protein is Photosystem II CP47 reaction center protein.